A 267-amino-acid chain; its full sequence is L-aspartate dehydrogenase (267 aa).

2 residues coordinate NAD(+): alanine 124 and asparagine 190. The active site involves histidine 218.

The protein belongs to the L-aspartate dehydrogenase family.

The catalysed reaction is L-aspartate + NADP(+) + H2O = oxaloacetate + NH4(+) + NADPH + H(+). It carries out the reaction L-aspartate + NAD(+) + H2O = oxaloacetate + NH4(+) + NADH + H(+). It participates in cofactor biosynthesis; NAD(+) biosynthesis; iminoaspartate from L-aspartate (dehydrogenase route): step 1/1. Specifically catalyzes the NAD or NADP-dependent dehydrogenation of L-aspartate to iminoaspartate. The chain is L-aspartate dehydrogenase from Methanococcus maripaludis (strain DSM 14266 / JCM 13030 / NBRC 101832 / S2 / LL).